We begin with the raw amino-acid sequence, 36 residues long: Photosystem I reaction center subunit VIII (36 aa).

Residues 7–29 (PSILVPLVGIIFPGISMALLFIY) traverse the membrane as a helical segment.

It belongs to the PsaI family.

The protein resides in the plastid. The protein localises to the chloroplast thylakoid membrane. Functionally, may help in the organization of the PsaL subunit. The protein is Photosystem I reaction center subunit VIII of Gracilaria tenuistipitata var. liui (Red alga).